The primary structure comprises 491 residues: Cytosolic Fe-S cluster assembly factor NAR1 (491 aa).

Residues Cys20, Cys65, Cys68, Cys71, Cys177, Cys232, Cys414, and Cys418 each contribute to the [4Fe-4S] cluster site.

Belongs to the NARF family.

Functionally, component of the cytosolic Fe/S protein assembly machinery. Required for maturation of extramitochondrial Fe/S proteins. May play a role in the transfer of pre-assembled Fe/S clusters to target apoproteins. This is Cytosolic Fe-S cluster assembly factor NAR1 (NAR1) from Yarrowia lipolytica (strain CLIB 122 / E 150) (Yeast).